We begin with the raw amino-acid sequence, 277 residues long: UBX domain-containing protein 10 (277 aa).

Residues M1–L102 form a disordered region. The segment covering T16–S31 has biased composition (polar residues). Basic residues predominate over residues H35–L50. Positions S60–S77 are enriched in low complexity. At S88 the chain carries Phosphoserine. One can recognise a UBX domain in the interval D191–I268.

It belongs to the UBXN10 family. In terms of assembly, interacts with CLUAP1; the interaction is direct and mediates interaction with the intraflagellar transport complex B (IFT-B). Interacts with VCP; the interaction is direct.

It localises to the cell projection. The protein localises to the cilium. Its function is as follows. VCP/p97-binding protein required for ciliogenesis. Acts as a tethering factor that facilitates recruitment of VCP/p97 to the intraflagellar transport complex B (IFT-B) in cilia. UBX domain-containing proteins act as tethering factors for VCP/p97 and may specify substrate specificity of VCP/p97. In Mus musculus (Mouse), this protein is UBX domain-containing protein 10.